The following is a 774-amino-acid chain: Probable E3 ubiquitin-protein ligase HECTD2 (774 aa).

The segment at 1-51 is disordered; the sequence is MSEAARDLSPGAPPAVAAAAPEERKGKEPEREKLPPIVTAGAAAGLDRGSK. The residue at position 9 (S9) is a Phosphoserine. Basic and acidic residues predominate over residues 21-34; the sequence is PEERKGKEPEREKL. The region spanning 435 to 774 is the HECT domain; the sequence is KRADLKKKLK…ISNSEGFGLE (340 aa). Catalysis depends on C742, which acts as the Glycyl thioester intermediate.

The catalysed reaction is S-ubiquitinyl-[E2 ubiquitin-conjugating enzyme]-L-cysteine + [acceptor protein]-L-lysine = [E2 ubiquitin-conjugating enzyme]-L-cysteine + N(6)-ubiquitinyl-[acceptor protein]-L-lysine.. Its pathway is protein modification; protein ubiquitination. Its function is as follows. E3 ubiquitin-protein ligase which accepts ubiquitin from an E2 ubiquitin-conjugating enzyme in the form of a thioester and then directly transfers the ubiquitin to targeted substrates. The protein is Probable E3 ubiquitin-protein ligase HECTD2 (Hectd2) of Mus musculus (Mouse).